The following is a 332-amino-acid chain: Probable cation efflux system protein MT2084 (332 aa).

Transmembrane regions (helical) follow at residues 46 to 66 (ISLLVLGLTALIQIVIVVMSG), 75 to 95 (IHNFADALTAVPLWIAFALGA), 113 to 133 (AGSFVVAMITMSAIIAGYEAI), 145 to 165 (VGWVALAGLVGFIGNEWVALY), and 202 to 222 (VALGFPLADPIVGLLITAAIL).

Belongs to the cation diffusion facilitator (CDF) transporter (TC 2.A.4) family.

The protein localises to the cell membrane. This is Probable cation efflux system protein MT2084 from Mycobacterium tuberculosis (strain CDC 1551 / Oshkosh).